Reading from the N-terminus, the 437-residue chain is Nicotinate phosphoribosyltransferase (437 aa).

A Phosphohistidine; by autocatalysis modification is found at His-231.

Belongs to the NAPRTase family. Post-translationally, transiently phosphorylated on a His residue during the reaction cycle. Phosphorylation strongly increases the affinity for substrates and increases the rate of nicotinate D-ribonucleotide production. Dephosphorylation regenerates the low-affinity form of the enzyme, leading to product release.

The catalysed reaction is nicotinate + 5-phospho-alpha-D-ribose 1-diphosphate + ATP + H2O = nicotinate beta-D-ribonucleotide + ADP + phosphate + diphosphate. It functions in the pathway cofactor biosynthesis; NAD(+) biosynthesis; nicotinate D-ribonucleotide from nicotinate: step 1/1. In terms of biological role, catalyzes the synthesis of beta-nicotinate D-ribonucleotide from nicotinate and 5-phospho-D-ribose 1-phosphate at the expense of ATP. This is Nicotinate phosphoribosyltransferase from Vibrio vulnificus (strain CMCP6).